A 500-amino-acid polypeptide reads, in one-letter code: Allene oxide synthase 3 (500 aa).

Positions 1-26 (MAPPPVNSGDAAAAATGEKSKLSPSG) are disordered. Residues 297–298 (FN), Lys-304, and 365–368 (PVEF) each bind substrate. Position 452 (Cys-452) interacts with heme.

It belongs to the cytochrome P450 family. Heme serves as cofactor. As to expression, not expressed in dark-grown seedlings.

It carries out the reaction (13S)-hydroperoxy-(9Z,11E,15Z)-octadecatrienoate = (9Z,13S,15Z)-12,13-epoxyoctadeca-9,11,15-trienoate + H2O. The protein operates within lipid metabolism; oxylipin biosynthesis. Functionally, involved in the biosynthesis of jasmonic acid, a growth regulator that is implicated also as a signaling molecule in plant defense. Converts 13-hydroperoxylinolenic acid to 12,13-epoxylinolenic acid. In Oryza sativa subsp. japonica (Rice), this protein is Allene oxide synthase 3 (CYP74A3).